We begin with the raw amino-acid sequence, 308 residues long: uncharacterized protein (308 aa).

10 helical membrane-spanning segments follow: residues 6 to 26 (VVLI…FGIL), 31 to 51 (AKIL…FLTI), 63 to 83 (FLKL…LAYL), 100 to 120 (ILVS…LGMF), 128 to 148 (AIFC…YVGI), 162 to 182 (MAKF…FFGF), 195 to 215 (LNYL…LSLS), 221 to 241 (FGVF…PATA), 257 to 277 (VLLV…GTLY), and 287 to 307 (SIFI…WILL).

It belongs to the auxin efflux carrier (TC 2.A.69) family.

It localises to the cell membrane. This is an uncharacterized protein from Methanocaldococcus jannaschii (strain ATCC 43067 / DSM 2661 / JAL-1 / JCM 10045 / NBRC 100440) (Methanococcus jannaschii).